Consider the following 568-residue polypeptide: Protein AF-9 (568 aa).

The 138-residue stretch at 1 to 138 folds into the YEATS domain; the sequence is MASSCAVQVK…EDFRRKLLKA (138 aa). Histone H3K9cr binding regions lie at residues 78 to 80 and 106 to 108; these read YAG and LHL. The segment at 138–475 is disordered; that stretch reads AGGDPNRSIH…PPPPLLKTNN (338 aa). Residues 149–190 show a composition bias toward low complexity; it reads SSSSSSSSSSSSSSSSSSSSSSSSSSSSSSSSSSSSSSSSSS. Residues 202–265 show a composition bias toward basic and acidic residues; that stretch reads EHKEKPSKDS…PKPMSKEPKP (64 aa). Phosphoserine occurs at positions 288 and 294. The Nuclear localization signal motif lies at 295–300; that stretch reads AKKRKK. The segment covering 303–313 has biased composition (low complexity); it reads SEALFKSFSSA. The span at 322-349 shows a compositional bias: basic and acidic residues; the sequence is ADKKQIKDKSHVKMGKVKIESETSEKKK. Lys-339 is covalently cross-linked (Glycyl lysine isopeptide (Lys-Gly) (interchain with G-Cter in SUMO2)). Acidic residues predominate over residues 357–368; sequence DIVDPNDSDVEE. The span at 371 to 395 shows a compositional bias: low complexity; the sequence is SSKSDSEQPSPASSSSSSSSSFTPS. Residues Ser-412 and Ser-419 each carry the phosphoserine modification. The segment covering 414–429 has biased composition (acidic residues); it reads DNEEESDEVEDNDNDS. Residues 445-461 show a composition bias toward low complexity; sequence VSLSDGSDSESSSASSP. Ser-483 is subject to Phosphoserine.

As to quaternary structure, component of the super elongation complex (SEC), at least composed of EAF1, EAF2, CDK9, MLLT3/AF9, AFF (AFF1 or AFF4), the P-TEFb complex and ELL (ELL, ELL2 or ELL3). Interacts with BCOR. Interacts with CBX8. Interacts with ALKBH4. As to expression, enriched in undifferentiated hematopoietic stem cells in fetal liver, cord blood and bone marrow.

Its subcellular location is the nucleus. The protein localises to the chromosome. Its activity is regulated as follows. Crotonylated lysine binding is strongly inhibited by the peptide XL-07i, carrying a 2-furancarbonyl side chain and capped with a hydrophobic carboxybenzyl group. XL-07i targets the unique pi-pi-pi stacking interaction at the crotonylation recognition site. In terms of biological role, chromatin reader component of the super elongation complex (SEC), a complex required to increase the catalytic rate of RNA polymerase II transcription by suppressing transient pausing by the polymerase at multiple sites along the DNA. Specifically recognizes and binds acylated histone H3, with a preference for histone H3 that is crotonylated. Crotonylation marks active promoters and enhancers and confers resistance to transcriptional repressors. Recognizes and binds histone H3 crotonylated at 'Lys-9' (H3K9cr), and with slightly lower affinity histone H3 crotonylated at 'Lys-18' (H3K18cr). Also recognizes and binds histone H3 acetylated and butyrylated at 'Lys-9' (H3K9ac and H3K9bu, respectively), but with lower affinity than crotonylated histone H3. In the SEC complex, MLLT3 is required to recruit the complex to crotonylated histones. Recruitment of the SEC complex to crotonylated histones promotes recruitment of DOT1L on active chromatin to deposit histone H3 'Lys-79' methylation (H3K79me). Plays a key role in hematopoietic stem cell (HSC) maintenance by preserving, rather than conferring, HSC stemness. Acts by binding to the transcription start site of active genes in HSCs and sustaining level of H3K79me2, probably by recruiting DOT1L. The sequence is that of Protein AF-9 from Homo sapiens (Human).